The sequence spans 204 residues: Kunitz-type trypsin inhibitor KTI2 (204 aa).

The N-terminal stretch at 1-25 (MKSTIFFALFLVCAFTISYLPSATA) is a signal peptide. 2 disulfide bridges follow: C65-C112 and C160-C169.

This sequence belongs to the protease inhibitor I3 (leguminous Kunitz-type inhibitor) family. Seed, and at low levels in leaf, root, and stem.

Its function is as follows. Has probably no trypsin inhibitor activity. KTi2 is responsible for most of the Kunitz trypsin inhibitor activity and protein found in soybean seeds. This Glycine max (Soybean) protein is Kunitz-type trypsin inhibitor KTI2 (KTI2).